We begin with the raw amino-acid sequence, 126 residues long: uncharacterized protein (126 aa).

The helical transmembrane segment at 55–77 threads the bilayer; the sequence is MLLINSNLVLSGLLLFIDVYRAA.

It is found in the membrane. This is an uncharacterized protein from Dictyostelium discoideum (Social amoeba).